Consider the following 423-residue polypeptide: Mitogen-activated protein kinase 9 (423 aa).

In terms of domain architecture, Protein kinase spans 26-321; it reads YQQLKPIGSG…VDEALRHPYI (296 aa). Residues 32–40 and K55 each bind ATP; that span reads IGSGAQGIV. Catalysis depends on D151, which acts as the Proton acceptor. Position 183 is a phosphothreonine; by MAP2K7 (T183). Residues 183-185 carry the TXY motif; that stretch reads TPY. Residue Y185 is modified to Phosphotyrosine; by MAP2K4. The segment covering 366-375 has biased composition (basic and acidic residues); the sequence is RSKNGVKDQP. The tract at residues 366–423 is disordered; the sequence is RSKNGVKDQPSDAAVSSKATPSQSSSINDISSMSTEHTLASDTDSSLDASTGPLEGCR. Low complexity predominate over residues 387–416; sequence SQSSSINDISSMSTEHTLASDTDSSLDAST.

The protein belongs to the protein kinase superfamily. CMGC Ser/Thr protein kinase family. MAP kinase subfamily. Interacts with MECOM. Binds to at least four scaffolding proteins, MAPK8IP1/JIP-1, MAPK8IP2/JIP-2, MAPK8IP3/JIP-3/JSAP1 and SPAG9/MAPK8IP4/JIP-4. These proteins also bind other components of the JNK signaling pathway. Interacts with NFATC4. Interacts with ATF7; the interaction does not phosphorylate ATF7 but acts as a docking site for ATF7-associated partners such as JUN. Interacts with BCL10. Interacts with CTNNB1 and GSK3B. Interacts with DCLK2. Interacts with MAPKBP1. Interacts with POU5F1; phosphorylates POU5F1 at 'Ser-347'. Found in a complex with SH3RF1, RAC2, MAP3K7/TAK1, MAP2K7/MKK7, MAPK8IP1/JIP1 and MAPK8/JNK1. It depends on Mg(2+) as a cofactor. Dually phosphorylated on Thr-183 and Tyr-185 by MAP2K7 and MAP2K4, which activates the enzyme. Autophosphorylated in vitro.

The protein resides in the cytoplasm. It localises to the nucleus. The catalysed reaction is L-seryl-[protein] + ATP = O-phospho-L-seryl-[protein] + ADP + H(+). It carries out the reaction L-threonyl-[protein] + ATP = O-phospho-L-threonyl-[protein] + ADP + H(+). Its activity is regulated as follows. Activated by threonine and tyrosine phosphorylation by either of two dual specificity kinases, MAP2K4 and MAP2K7. MAP2K4 shows a strong preference for Tyr-185 while MAP2K7 phosphorylates Tyr-183 preferentially. Inhibited by dual specificity phosphatases, such as DUSP1. In terms of biological role, serine/threonine-protein kinase involved in various processes such as cell proliferation, differentiation, migration, transformation and programmed cell death. Extracellular stimuli such as pro-inflammatory cytokines or physical stress stimulate the stress-activated protein kinase/c-Jun N-terminal kinase (SAP/JNK) signaling pathway. In this cascade, two dual specificity kinases MAP2K4/MKK4 and MAP2K7/MKK7 phosphorylate and activate MAPK9/JNK2. In turn, MAPK9/JNK2 phosphorylates a number of transcription factors, primarily components of AP-1 such as JUN and ATF2 and thus regulates AP-1 transcriptional activity. In response to oxidative or ribotoxic stresses, inhibits rRNA synthesis by phosphorylating and inactivating the RNA polymerase 1-specific transcription initiation factor RRN3. Promotes stressed cell apoptosis by phosphorylating key regulatory factors including TP53 and YAP1. In T-cells, MAPK8 and MAPK9 are required for polarized differentiation of T-helper cells into Th1 cells. Upon T-cell receptor (TCR) stimulation, is activated by CARMA1, BCL10, MAP2K7 and MAP3K7/TAK1 to regulate JUN protein levels. Plays an important role in the osmotic stress-induced epithelial tight-junctions disruption. When activated, promotes beta-catenin/CTNNB1 degradation and inhibits the canonical Wnt signaling pathway. Also participates in neurite growth in spiral ganglion neurons. Phosphorylates the CLOCK-BMAL1 heterodimer and plays a role in the regulation of the circadian clock. Phosphorylates POU5F1, which results in the inhibition of POU5F1's transcriptional activity and enhances its proteasomal degradation. Phosphorylates ALKBH5 in response to reactive oxygen species (ROS), promoting ALKBH5 sumoylation and inactivation. The sequence is that of Mitogen-activated protein kinase 9 (Mapk9) from Rattus norvegicus (Rat).